We begin with the raw amino-acid sequence, 127 residues long: Small ribosomal subunit protein uS13 (127 aa).

The disordered stretch occupies residues 97-127; sequence PVRGQRTRTNARTRRGGRKTVAGKKKAAAKK. Residues 101–127 show a composition bias toward basic residues; that stretch reads QRTRTNARTRRGGRKTVAGKKKAAAKK.

Belongs to the universal ribosomal protein uS13 family. Part of the 30S ribosomal subunit. Forms a loose heterodimer with protein S19. Forms two bridges to the 50S subunit in the 70S ribosome.

Its function is as follows. Located at the top of the head of the 30S subunit, it contacts several helices of the 16S rRNA. In the 70S ribosome it contacts the 23S rRNA (bridge B1a) and protein L5 of the 50S subunit (bridge B1b), connecting the 2 subunits; these bridges are implicated in subunit movement. Contacts the tRNAs in the A and P-sites. In Gloeobacter violaceus (strain ATCC 29082 / PCC 7421), this protein is Small ribosomal subunit protein uS13.